The primary structure comprises 305 residues: Major pollen allergen Pha a 5.2 (305 aa).

The N-terminal stretch at 1–25 (MAVQKYTVALFLAVALVAGPAALYA) is a signal peptide. The segment covering 65-85 (GLNEEKNAARQTDDEQKRSDE) has biased composition (basic and acidic residues). Disordered stretches follow at residues 65-87 (GLNE…DEIN) and 279-299 (STAT…PAAV).

It belongs to the Poa p IX/Phl p VI allergen family.

This Phalaris aquatica (Canary grass) protein is Major pollen allergen Pha a 5.2.